A 308-amino-acid polypeptide reads, in one-letter code: SAP30-binding protein (308 aa).

Residues 15 to 101 (AEDSEPESDG…EAEKRDPQEL (87 aa)) are disordered. Over residues 16 to 26 (EDSEPESDGEA) the composition is skewed to acidic residues. Phosphoserine occurs at positions 18, 22, 43, and 52. The segment covering 57 to 78 (DEDGYEEEEDENSRQSEDDDSE) has biased composition (acidic residues). Residues 79-99 (TEKPEADDPKDNTEAEKRDPQ) are compositionally biased toward basic and acidic residues. Lys95 participates in a covalent cross-link: Glycyl lysine isopeptide (Lys-Gly) (interchain with G-Cter in SUMO2). Phosphoserine is present on Ser113. Residues Lys220, Lys304, and Lys305 each participate in a glycyl lysine isopeptide (Lys-Gly) (interchain with G-Cter in SUMO2) cross-link.

This sequence belongs to the HCNGP family. As to quaternary structure, interacts with histone deacetylase complex subunit SAP30.

The protein localises to the nucleus. Its function is as follows. Plays a role in transcriptional repression by promoting histone deacetylase activity, leading to deacetylation of histone H3. May be involved in the regulation of beta-2-microglobulin genes. Functionally, (Microbial infection) Involved in transcriptional repression of HHV-1 genes TK and gC. This is SAP30-binding protein from Homo sapiens (Human).